The sequence spans 639 residues: Chaperone protein DnaK (639 aa).

Phosphothreonine; by autocatalysis is present on Thr-197. Composition is skewed to basic and acidic residues over residues 514–529 (AEEN…DLVE) and 540–553 (GTEK…EKVD). 2 disordered regions span residues 514-554 (AEEN…KVDP) and 603-639 (DKAE…RKRG). A compositionally biased stretch (acidic residues) spans 612–633 (APEEEERGVDEDIVDADFEDLD).

Belongs to the heat shock protein 70 family.

Acts as a chaperone. This Jannaschia sp. (strain CCS1) protein is Chaperone protein DnaK.